Consider the following 439-residue polypeptide: Exosome complex component RRP45 (439 aa).

An ARE binding region spans residues 1–268 (MKETPLSNCE…AEITELILKA (268 aa)). The residue at position 65 (serine 65) is a Phosphoserine. Lysine 297 carries the N6-acetyllysine; alternate modification. Residue lysine 297 forms a Glycyl lysine isopeptide (Lys-Gly) (interchain with G-Cter in SUMO1); alternate linkage. Lysine 297 is covalently cross-linked (Glycyl lysine isopeptide (Lys-Gly) (interchain with G-Cter in SUMO2); alternate). 4 positions are modified to phosphoserine: serine 306, valine 325, serine 327, and serine 346. 2 disordered regions span residues 335–363 (GTAQIGEGVENSWGDLEDSEKEDDEGGGD) and 391–439 (LSDS…RAAN). Over residues 349 to 361 (DLEDSEKEDDEGG) the composition is skewed to acidic residues. Residues serine 392, serine 394, lysine 409, and isoleucine 411 each carry the phosphoserine modification. Lysine 419 participates in a covalent cross-link: Glycyl lysine isopeptide (Lys-Gly) (interchain with G-Cter in SUMO2). A compositionally biased stretch (basic residues) spans 425-439 (SKKPVKRRKKKRAAN).

This sequence belongs to the RNase PH family. In terms of assembly, component of the RNA exosome core complex (Exo-9), composed of EXOSC1, EXOSC2, EXOSC3, EXOSC4, EXOSC5, EXOSC6, EXOSC7, EXOSC8 and EXOSC9; within the complex interacts with EXOSC3, EXOSC4, EXOSC5 and DIS3. The catalytically inactive RNA exosome core complex (Exo-9) associates with the catalytic subunit EXOSC10/RRP6. Exo-9 may associate with DIS3 to form the nucleolar exosome complex, or DIS3L to form the cytoplasmic exosome complex. Exo-9 is formed by a hexameric base ring consisting of the heterodimers EXOSC4-EXOSC9, EXOSC5-EXOSC8 and EXOSC6-EXOSC7, and a cap ring consisting of EXOSC1, EXOSC2 and EXOSC3. The RNA exosome complex associates with cofactors C1D/RRP47, MPHOSPH6/MPP6 and MTREX/MTR4. Interacts (via C-terminus region) with SETX (via N-terminus domain); the interaction enhances SETX sumoylation. Interacts with DIS3; the interaction is direct.

It is found in the cytoplasm. The protein localises to the nucleus. The protein resides in the nucleolus. Its subcellular location is the nucleoplasm. Its function is as follows. Non-catalytic component of the RNA exosome complex which has 3'-&gt;5' exoribonuclease activity and participates in a multitude of cellular RNA processing and degradation events. In the nucleus, the RNA exosome complex is involved in proper maturation of stable RNA species such as rRNA, snRNA and snoRNA, in the elimination of RNA processing by-products and non-coding 'pervasive' transcripts, such as antisense RNA species and promoter-upstream transcripts (PROMPTs), and of mRNAs with processing defects, thereby limiting or excluding their export to the cytoplasm. The RNA exosome may be involved in Ig class switch recombination (CSR) and/or Ig variable region somatic hypermutation (SHM) by targeting AICDA deamination activity to transcribed dsDNA substrates. In the cytoplasm, the RNA exosome complex is involved in general mRNA turnover and specifically degrades inherently unstable mRNAs containing AU-rich elements (AREs) within their 3' untranslated regions, and in RNA surveillance pathways, preventing translation of aberrant mRNAs. It seems to be involved in degradation of histone mRNA. The catalytic inactive RNA exosome core complex of 9 subunits (Exo-9) is proposed to play a pivotal role in the binding and presentation of RNA for ribonucleolysis, and to serve as a scaffold for the association with catalytic subunits and accessory proteins or complexes. EXOSC9 binds to ARE-containing RNAs. The sequence is that of Exosome complex component RRP45 (EXOSC9) from Homo sapiens (Human).